Reading from the N-terminus, the 608-residue chain is MSCDNKQALSGVTLAAIGVVYGDIGTSPLYTLRECLSGQFGIRAEPAAILGFLSLIFWLLILVVSVKYLSFVMRADNAGEGGILTLMSLATRNASPRWTPVLIILGLIGGSFFYGEVVITPAMSVMSAIEGLSLMAPSLDPYIVPLSVLVLTLLFAIQKHGTAMVGKLFAPIMLTWFLTLAVLGLRSIIQNPEVLGALNPIWALRFFAEYQTTSFFALGAVVLAITGVEALYADMGHFGKNPIRLAWFVVVLPSLVLNYFGQGALLLDNPAAIANPFFLLAPKWALLPLLVLATMATVIASQAVISGVFSLTRQAVRLGYLSPIRIVHTSEQESGQIYIPVINWILYISVVIVIMSFEHSSNLAAAYGIAVTGTMVLTSILFCSVAKNSWHWPTYLVAALFALLLAIDVPLFAANLGKIFSGGWLPLTLGAVMFTLMTSWKSERFQLIRRLNEHGNSLEPMIASLEKSPPTRVAGTAVYMSRVVNVIPHALLHNLKHNKVLHERIILLTLRVEDVPYVHNVRRVCIEQLSPTFWRVVASYGWRETPNMEEIFHRCNAEGLSCRMMETSFFMAHESLIMKERPCAANCLCCCSATPCAQRISSRSRPIG.

12 helical membrane passes run 9-29 (LSGVTLAAIGVVYGDIGTSPL), 46-66 (PAAILGFLSLIFWLLILVVSV), 99-119 (TPVLIILGLIGGSFFYGEVVI), 137-157 (PSLDPYIVPLSVLVLTLLFAI), 165-185 (VGKLFAPIMLTWFLTLAVLGL), 213-233 (TSFFALGAVVLAITGVEALYA), 247-267 (WFVVVLPSLVLNYFGQGALLL), 285-305 (ALLPLLVLATMATVIASQAVI), 337-357 (IYIPVINWILYISVVIVIMSF), 363-383 (LAAAYGIAVTGTMVLTSILFC), 396-416 (LVAALFALLLAIDVPLFAANL), and 419-439 (IFSGGWLPLTLGAVMFTLMTS).

Belongs to the HAK/KUP transporter (TC 2.A.72) family.

Its subcellular location is the cell inner membrane. It carries out the reaction K(+)(in) + H(+)(in) = K(+)(out) + H(+)(out). In terms of biological role, transport of potassium into the cell. Likely operates as a K(+):H(+) symporter. This is Probable potassium transport system protein Kup from Aeromonas salmonicida (strain A449).